The primary structure comprises 49 residues: Large ribosomal subunit protein bL34 (49 aa).

It belongs to the bacterial ribosomal protein bL34 family.

The protein is Large ribosomal subunit protein bL34 of Sorangium cellulosum (strain So ce56) (Polyangium cellulosum (strain So ce56)).